A 457-amino-acid chain; its full sequence is Argininosuccinate lyase (457 aa).

This sequence belongs to the lyase 1 family. Argininosuccinate lyase subfamily.

The protein resides in the cytoplasm. The enzyme catalyses 2-(N(omega)-L-arginino)succinate = fumarate + L-arginine. It functions in the pathway amino-acid biosynthesis; L-arginine biosynthesis; L-arginine from L-ornithine and carbamoyl phosphate: step 3/3. The polypeptide is Argininosuccinate lyase (Cronobacter sakazakii (strain ATCC BAA-894) (Enterobacter sakazakii)).